A 50-amino-acid chain; its full sequence is Protein PsbN (50 aa).

A helical transmembrane segment spans residues 14 to 34 (VAVTILAILLALTGFGLWTAF).

Belongs to the PsbN family.

The protein resides in the cellular thylakoid membrane. May play a role in photosystem I and II biogenesis. This Prochlorococcus marinus (strain MIT 9312) protein is Protein PsbN.